A 677-amino-acid polypeptide reads, in one-letter code: DNA ligase (677 aa).

NAD(+) contacts are provided by residues 38–42 (DSVYD), 87–88 (SL), and Glu-119. The active-site N6-AMP-lysine intermediate is Lys-121. NAD(+) is bound by residues Arg-142, Glu-179, Lys-296, and Lys-320. Zn(2+)-binding residues include Cys-414, Cys-417, Cys-432, and Cys-438. A BRCT domain is found at 595-677 (VVKSEIAGKT…LKLLKSKGVF (83 aa)).

The protein belongs to the NAD-dependent DNA ligase family. LigA subfamily. It depends on Mg(2+) as a cofactor. Requires Mn(2+) as cofactor.

It carries out the reaction NAD(+) + (deoxyribonucleotide)n-3'-hydroxyl + 5'-phospho-(deoxyribonucleotide)m = (deoxyribonucleotide)n+m + AMP + beta-nicotinamide D-nucleotide.. Its function is as follows. DNA ligase that catalyzes the formation of phosphodiester linkages between 5'-phosphoryl and 3'-hydroxyl groups in double-stranded DNA using NAD as a coenzyme and as the energy source for the reaction. It is essential for DNA replication and repair of damaged DNA. This chain is DNA ligase, found in Coxiella burnetii (strain CbuG_Q212) (Coxiella burnetii (strain Q212)).